The following is a 1429-amino-acid chain: MSIGETSNYDRINDYASVRISLARPQDIKAWSFGEVKKPETINYRTYRPEKDGLFCERIFGPEKDWECACGKYRGMKYKGMICDRCGVKVTHSRVRRKRMGHIELAAPVVHIWFFKAMPSRLGNLLAMKTSSLEKVIYFQDYVVTDPKDTDLEMLQLLTEEEYRAARQQYGSGSFQADMGAEAVRDLLNKLDLVTLSDQLRVDLAETGSKQKKKDLINRLKIVESIRDSDNRPEWMVLDVIPVIPPDLRPLVLLDSGNFATSDLNDLYRRIINRNNRLRKLVDLNAPEVIIRNEKRMLQQSVDALFDNNRCKRPVLGSSNRPLKSLTDMIKGKQGRFRENLLGKRVDYSARSVIVVGPRLKLHQCGLPKKIALELYQPFIIRRLKELGHADTIKSAKKMLERKDEEVWDILEQVITNHPVLLNRAPTLHRMGIQAFEPTLVEGNAIHLHPLVCKGFNADFDGDQMAVHLPLSIEAQVEAHTLMMSTNNVFAPSNGKPIMSPSQDIVMGCYFMTVEMPDQKGEGMTFSTYEEVDYALAQGIVGLHTRIKLRLPKYQKLKTDDESGEYGAIIDTTPGRVRFNEMLPVGMDFYNRAMRSGDLAKSISDCYQRLGRKATIHLLDDMMQTGFRESTRSGLSFATDDLVTPDTKLQFIKEAEKEVMKHKKAYDRGLMTGKERYNQVLDAWTHAREAITADMMSAMENDIRPGGWYINPVFLMSHSGARGGIEQIRQLAGMRGLMAKPTGEIIETPIKANFREGLSVLEYFSSTHGARKGLADTALKTADSGYLTRKLADVAQNVVVTMHDCGTTQGITKGVVYRGEKVEVSLAESINGRVSLKSIVNPVTDEVIVEANQMITPEIARNIEAMGLEKIQVRTPMSCDAPLGVCRCCYGMDMSTGSMVEEGMAVGIIAAQSIGEPGTQLTMRTFHIGGSVSKQVEESDIKTSRDGEVRLTRMKAVTNAEGRDIVLTRNGQIMLVDDRGREVESYDIPTGAMLMVKEGDKVTAGQVLCEWNPYSIPILSEVTGKIRFEDVVEGETMRLDREASGNTRMTIIDHKGDLHPQLVIEDETGRPLHAQYLPERATISVKEGEEVIPGKVLAEMPRETGGVSDITGGLPRVTEIFEARKPKDPAVIAEVDGEVEILSERKRGKRTIIVRSESGIEREHLVPHGKHFLVHTGDIVKAGQALVDGALVPHDILRVTGEEAVQQYLLHEIQQVYRSQRVEINDKHGEIIIARMLRKVKIENAGDTNLLPGSVMDRFHFRKANQDLQKCIKIANPGDTDYTEGTIVPKEAFEQTNAEVEAMGGTPAKGKRCKSATASTQLLGITKAAVQSNSFISAASFQETTKVLTEAALAGKVDKLVGLKENVILGHLIPAGTGFRIFQESEVNYRREALEELSQAPVSALEESFPLLGGDGEPASTTSSTTEGE.

Positions 68, 70, 83, and 86 each coordinate Zn(2+). Mg(2+)-binding residues include D459, D461, and D463. Residues C805, C879, C886, and C889 each contribute to the Zn(2+) site. Residues 1407–1429 are disordered; that stretch reads ESFPLLGGDGEPASTTSSTTEGE. A compositionally biased stretch (polar residues) spans 1419–1429; it reads ASTTSSTTEGE.

It belongs to the RNA polymerase beta' chain family. In terms of assembly, the RNAP catalytic core consists of 2 alpha, 1 beta, 1 beta' and 1 omega subunit. When a sigma factor is associated with the core the holoenzyme is formed, which can initiate transcription. Requires Mg(2+) as cofactor. Zn(2+) serves as cofactor.

The enzyme catalyses RNA(n) + a ribonucleoside 5'-triphosphate = RNA(n+1) + diphosphate. DNA-dependent RNA polymerase catalyzes the transcription of DNA into RNA using the four ribonucleoside triphosphates as substrates. The protein is DNA-directed RNA polymerase subunit beta' of Rhodopirellula baltica (strain DSM 10527 / NCIMB 13988 / SH1).